The primary structure comprises 445 residues: MAHSHSGSVNYFESANKVIYEGKESTNPLAFKYYNSQEVIGGKTMKEHLRFSIAYWHTFTADGTDIFGAATMQRPWDHYKGMDLARARVDAAFELFEKLDAPFFAFHDRDIAPEGSTLKETNQNLDLIVDMIKDYMRTSGVKLLWNTANMFTNPRFVHGAATSCNADVFAYAAAQVKKGLETAKELGAENYVFWGGREGYETLLNTDLKFELDNMARFMHMAVDYAKEIGYTGQFLIEPKPKEPTTHQYDTDAATTIAFLKQYGLDNHFKLNLEANHATLAGHTFEHELRMARVHGLLGSVDANQGDPLLGWDTDEFPTDLYSATLAMYEILKNGGLGSGGLNFDAKVRRSSFEPDDLLYAHVAGMDTFARGLKAARKLIEDRVFEDVIQHRYRSFTEGIGLEIAEGRADFKTLEQYALNNQPIKNESGRQERLKAILNQYILQV.

Active-site residues include His107 and Asp110. Residues Glu238, Glu274, His277, Asp302, Asp313, Asp315, and Asp345 each contribute to the Mg(2+) site.

It belongs to the xylose isomerase family. As to quaternary structure, homotetramer. It depends on Mg(2+) as a cofactor.

The protein resides in the cytoplasm. It catalyses the reaction alpha-D-xylose = alpha-D-xylulofuranose. The protein is Xylose isomerase of Bacillus velezensis (strain DSM 23117 / BGSC 10A6 / LMG 26770 / FZB42) (Bacillus amyloliquefaciens subsp. plantarum).